A 118-amino-acid chain; its full sequence is Large ribosomal subunit protein bL20 (118 aa).

This sequence belongs to the bacterial ribosomal protein bL20 family.

Binds directly to 23S ribosomal RNA and is necessary for the in vitro assembly process of the 50S ribosomal subunit. It is not involved in the protein synthesizing functions of that subunit. In Salmonella arizonae (strain ATCC BAA-731 / CDC346-86 / RSK2980), this protein is Large ribosomal subunit protein bL20.